The primary structure comprises 217 residues: MKFFVDSANCEDIQELQNLGLVDGVTTNPSLILQSGRNILDVIQEICSLVEGPVSAEVAATDFDTMMKEAAVLAKIANNICIKLPITLDGLKACKALSEQELKTNLTLCFSATQALLAAKAGATFVSPFIGRIDDCGTNGIDLLHEIRTIYDNYGFATQILAASIRTTTHVKEAALSGADVATVPPKVLKSLAAHPLTDKGLQTFLTDWAKTGQKIA.

The active-site Schiff-base intermediate with substrate is the K83.

The protein belongs to the transaldolase family. Type 3B subfamily.

It is found in the cytoplasm. The enzyme catalyses D-sedoheptulose 7-phosphate + D-glyceraldehyde 3-phosphate = D-erythrose 4-phosphate + beta-D-fructose 6-phosphate. It functions in the pathway carbohydrate degradation; pentose phosphate pathway; D-glyceraldehyde 3-phosphate and beta-D-fructose 6-phosphate from D-ribose 5-phosphate and D-xylulose 5-phosphate (non-oxidative stage): step 2/3. In terms of biological role, transaldolase is important for the balance of metabolites in the pentose-phosphate pathway. The protein is Probable transaldolase of Bartonella bacilliformis (strain ATCC 35685 / KC583 / Herrer 020/F12,63).